The chain runs to 172 residues: 3-hydroxydecanoyl-[acyl-carrier-protein] dehydratase (172 aa).

Histidine 71 is an active-site residue.

The protein belongs to the thioester dehydratase family. FabA subfamily. As to quaternary structure, homodimer.

It localises to the cytoplasm. It catalyses the reaction a (3R)-hydroxyacyl-[ACP] = a (2E)-enoyl-[ACP] + H2O. The enzyme catalyses (3R)-hydroxydecanoyl-[ACP] = (2E)-decenoyl-[ACP] + H2O. It carries out the reaction (2E)-decenoyl-[ACP] = (3Z)-decenoyl-[ACP]. It functions in the pathway lipid metabolism; fatty acid biosynthesis. In terms of biological role, necessary for the introduction of cis unsaturation into fatty acids. Catalyzes the dehydration of (3R)-3-hydroxydecanoyl-ACP to E-(2)-decenoyl-ACP and then its isomerization to Z-(3)-decenoyl-ACP. Can catalyze the dehydratase reaction for beta-hydroxyacyl-ACPs with saturated chain lengths up to 16:0, being most active on intermediate chain length. The sequence is that of 3-hydroxydecanoyl-[acyl-carrier-protein] dehydratase from Pseudoalteromonas atlantica (strain T6c / ATCC BAA-1087).